The sequence spans 493 residues: Glycylpeptide N-tetradecanoyltransferase (493 aa).

Residues 1–30 form a disordered region; it reads MSDSKDSKGKAPQKPNDAEQTPGGKLTPQA. Residues 82-85, 216-218, and 224-228 contribute to the tetradecanoyl-CoA site; these read FKFW, LCI, and SKRLA. Leucine 493 serves as the catalytic Proton acceptor; via carboxylate.

This sequence belongs to the NMT family. In terms of assembly, monomer.

It localises to the cytoplasm. The catalysed reaction is N-terminal glycyl-[protein] + tetradecanoyl-CoA = N-tetradecanoylglycyl-[protein] + CoA + H(+). Its function is as follows. Adds a myristoyl group to the N-terminal glycine residue of certain cellular proteins. The protein is Glycylpeptide N-tetradecanoyltransferase (swoF) of Emericella nidulans (strain FGSC A4 / ATCC 38163 / CBS 112.46 / NRRL 194 / M139) (Aspergillus nidulans).